Consider the following 300-residue polypeptide: Beta-lactamase (300 aa).

A signal peptide spans Met1 to Ala29. The active-site Acyl-ester intermediate is the Ser75. Lys239–Gly241 serves as a coordination point for substrate.

Belongs to the class-A beta-lactamase family. As to quaternary structure, monomer.

It catalyses the reaction a beta-lactam + H2O = a substituted beta-amino acid. In terms of biological role, hydrolyzes broad-spectrum beta-lactam antibiotics. Active against cephalosporins such as cefuroxime and cefotaxime. The polypeptide is Beta-lactamase (blaB) (Proteus vulgaris).